A 283-amino-acid polypeptide reads, in one-letter code: Phosphatidylglycerol--prolipoprotein diacylglyceryl transferase (283 aa).

Helical transmembrane passes span 21 to 41, 62 to 82, 106 to 126, 136 to 156, 190 to 210, 218 to 238, and 252 to 272; these read IEVH…FYMA, YFLW…ILIY, FIGI…IASY, LLIY…FGRI, PSQL…VMWA, GLLI…AEFY, and LSMG…ILLY. Residue arginine 155 coordinates a 1,2-diacyl-sn-glycero-3-phospho-(1'-sn-glycerol).

It belongs to the Lgt family.

It is found in the cell inner membrane. It carries out the reaction L-cysteinyl-[prolipoprotein] + a 1,2-diacyl-sn-glycero-3-phospho-(1'-sn-glycerol) = an S-1,2-diacyl-sn-glyceryl-L-cysteinyl-[prolipoprotein] + sn-glycerol 1-phosphate + H(+). It participates in protein modification; lipoprotein biosynthesis (diacylglyceryl transfer). Its function is as follows. Catalyzes the transfer of the diacylglyceryl group from phosphatidylglycerol to the sulfhydryl group of the N-terminal cysteine of a prolipoprotein, the first step in the formation of mature lipoproteins. This chain is Phosphatidylglycerol--prolipoprotein diacylglyceryl transferase, found in Helicobacter acinonychis (strain Sheeba).